Consider the following 237-residue polypeptide: Type III pantothenate kinase (237 aa).

6-13 contacts ATP; the sequence is DAGNSRVK. Substrate contacts are provided by residues Tyr-86 and 93–96; that span reads GADR. Asp-95 functions as the Proton acceptor in the catalytic mechanism. Thr-118 provides a ligand contact to ATP. A substrate-binding site is contributed by Thr-168.

Belongs to the type III pantothenate kinase family. In terms of assembly, homodimer. Requires NH4(+) as cofactor. It depends on K(+) as a cofactor.

The protein localises to the cytoplasm. The enzyme catalyses (R)-pantothenate + ATP = (R)-4'-phosphopantothenate + ADP + H(+). Its pathway is cofactor biosynthesis; coenzyme A biosynthesis; CoA from (R)-pantothenate: step 1/5. In terms of biological role, catalyzes the phosphorylation of pantothenate (Pan), the first step in CoA biosynthesis. The polypeptide is Type III pantothenate kinase (Chromobacterium violaceum (strain ATCC 12472 / DSM 30191 / JCM 1249 / CCUG 213 / NBRC 12614 / NCIMB 9131 / NCTC 9757 / MK)).